The sequence spans 29 residues: Brevinin-2Td (29 aa).

Residues C23 and C29 are joined by a disulfide bond.

This sequence belongs to the frog skin active peptide (FSAP) family. Brevinin subfamily. As to expression, expressed by the skin glands.

It is found in the secreted. Functionally, antibacterial activity against representative Gram-negative and Gram-positive bacteria. The protein is Brevinin-2Td of Rana temporaria (European common frog).